The chain runs to 156 residues: Rhombotin-1 (156 aa).

LIM zinc-binding domains lie at 22–84 and 86–148; these read KGCA…LFGT and GNCA…GQLN.

Expressed in the brain and not in the thymus.

It is found in the nucleus. Its function is as follows. May be involved in gene regulation within neural lineage cells potentially by direct DNA binding or by binding to other transcription factors. This is Rhombotin-1 (LMO1) from Bos taurus (Bovine).